Here is a 295-residue protein sequence, read N- to C-terminus: Cbb3-type cytochrome c oxidase subunit CcoP (295 aa).

Residues 1–31 (MAQKEKDALSGVETTGHEWDGLRELNNPLPK) lie on the Cytoplasmic side of the membrane. Residues 32–52 (WWLYIFYVCIAWSLVYYVLYP) form a helical membrane-spanning segment. Residues 53–295 (AWPLGKSYTK…VYVHNLGGGK (243 aa)) are Periplasmic-facing. Cytochrome c domains lie at 108-200 (FAMA…LSLN) and 207-292 (AAAE…HNLG). Heme c-binding residues include Cys121, Cys124, His125, Met175, Cys220, Cys223, His224, and Met269.

Belongs to the CcoP / FixP family. In terms of assembly, component of the cbb3-type cytochrome c oxidase at least composed of CcoN, CcoO, CcoQ and CcoP. Heme c serves as cofactor.

It localises to the cell inner membrane. It participates in energy metabolism; oxidative phosphorylation. In terms of biological role, C-type cytochrome. Part of the cbb3-type cytochrome c oxidase complex. CcoP subunit is required for transferring electrons from donor cytochrome c via its heme groups to CcoO subunit. From there, electrons are shuttled to the catalytic binuclear center of CcoN subunit where oxygen reduction takes place. The complex also functions as a proton pump. This chain is Cbb3-type cytochrome c oxidase subunit CcoP, found in Azospirillum brasilense.